The following is a 441-amino-acid chain: MPVAKDLFPEYGTLATGENEPSRNIRRAQKLREFQNLELPPYLAKQVAAKMAEKGLAVEATGGVAVQRIAGGSQSGQKALMGASSSALTKHTPSASQPTTHDSLTNLGANLTQSKPAWHAPWEIYRVITGHQGWVRSVCVEPENQWFATGSADKTIKIWDLATGKLRLTLTGHIMGVRALGVSPRHPYMFSGGEDKMVKCWDLETNKVVRHYHGHLSAVYSLDIHPTLDVLVSAGRDAVARVWDIRTRDPVVVLSGHKSTINRVKFQASEPQVITASADETVRLWNLQAGKTMTTLTHHKKSVRGLTLHPEEFTFSTASANSSKQWKCPEGDLVLNYDDQNAIINTLSVNQDNVMFSGGDNGSIGFYDWKTGHMFQSTQSIPIPGSIESENGIFDSSFDKTGLRLITCEADKSIKMWREKPNATAESDPGLEWKPKIYQTY.

Disordered regions lie at residues 1 to 22 (MPVAKDLFPEYGTLATGENEPS) and 81 to 107 (MGASSSALTKHTPSASQPTTHDSLTNL). The span at 83-107 (ASSSALTKHTPSASQPTTHDSLTNL) shows a compositional bias: polar residues. WD repeat units lie at residues 130–169 (GHQGWVRSVCVEPENQWFATGSADKTIKIWDLATGKLRLT), 172–211 (GHIMGVRALGVSPRHPYMFSGGEDKMVKCWDLETNKVVRH), 214–253 (GHLSAVYSLDIHPTLDVLVSAGRDAVARVWDIRTRDPVVV), 256–295 (GHKSTINRVKFQASEPQVITASADETVRLWNLQAGKTMTT), 298–336 (HHKKSVRGLTLHPEEFTFSTASANSSKQWKCPEGDLVLN), 339–379 (DQNA…QSTQ), and 388–427 (ESENGIFDSSFDKTGLRLITCEADKSIKMWREKPNATAES).

The protein belongs to the WD repeat PRL1/PRL2 family. As to quaternary structure, associated with the spliceosome.

The protein localises to the cytoplasm. It localises to the nucleus. Its function is as follows. Involved in pre-mRNA splicing and required for cell cycle progression at G2/M. The protein is Pre-mRNA-splicing factor PRP46 (PRP46) of Yarrowia lipolytica (strain CLIB 122 / E 150) (Yeast).